A 970-amino-acid chain; its full sequence is Disease resistance protein RGA2 (970 aa).

An NB-ARC domain is found at 135-438 (RQAVRRETGS…MAHGFLLSKG (304 aa)). An ATP-binding site is contributed by 182-189 (GMGGLGKT). 14 LRR repeats span residues 525–548 (FISL…IGDL), 550–571 (HLRY…LCKL), 573–594 (NLQT…ETSK), 595–619 (LGSL…IGSL), 638–662 (LGEL…KNDK), 672–697 (KGNL…EVKV), 752–777 (LPCL…DIDV), 787–811 (FPSL…EGEE), 813–832 (FPVL…LSSN), 833–857 (LRAL…MFKN), 859–882 (ANLK…LASL), 884–906 (ALKS…GLEG), 907–931 (LSSL…LQHL), and 946–970 (IKRC…NIYI).

The protein belongs to the disease resistance NB-LRR family.

Its function is as follows. Disease resistance protein. Resistance proteins guard the plant against pathogens that contain an appropriate avirulence protein via a direct or indirect interaction with this avirulence protein. That triggers a defense system which restricts the pathogen growth. Confers a broad resistance to all known races of P.infestans. This chain is Disease resistance protein RGA2 (RGA2), found in Solanum bulbocastanum (Wild potato).